A 752-amino-acid polypeptide reads, in one-letter code: Multifunctional tryptophan biosynthesis protein (752 aa).

The Glutamine amidotransferase type-1 domain occupies 23–223; the sequence is NVILIDNYDS…LELTAGTWDN (201 aa). An L-glutamine-binding site is contributed by 74–76; sequence GPG. The active-site Nucleophile; for GATase activity is Cys-102. L-glutamine is bound by residues Gln-106 and 152–153; that span reads SL. Residues His-197 and Glu-199 each act as for GATase activity in the active site. The indole-3-glycerol phosphate synthase stretch occupies residues 239-503; that stretch reads ILDKIYAHRK…DTSAFVAQLL (265 aa). Residues 519 to 752 are N-(5'-phosphoribosyl)anthranilate isomerase; sequence LVKICGTRTE…FVKSAKSIRQ (234 aa).

It catalyses the reaction N-(5-phospho-beta-D-ribosyl)anthranilate = 1-(2-carboxyphenylamino)-1-deoxy-D-ribulose 5-phosphate. The enzyme catalyses 1-(2-carboxyphenylamino)-1-deoxy-D-ribulose 5-phosphate + H(+) = (1S,2R)-1-C-(indol-3-yl)glycerol 3-phosphate + CO2 + H2O. The catalysed reaction is chorismate + L-glutamine = anthranilate + pyruvate + L-glutamate + H(+). It functions in the pathway amino-acid biosynthesis; L-tryptophan biosynthesis; L-tryptophan from chorismate: step 1/5. Its pathway is amino-acid biosynthesis; L-tryptophan biosynthesis; L-tryptophan from chorismate: step 3/5. The protein operates within amino-acid biosynthesis; L-tryptophan biosynthesis; L-tryptophan from chorismate: step 4/5. Trifunctional enzyme bearing the Gln amidotransferase (GATase) domain of anthranilate synthase, indole-glycerolphosphate synthase, and phosphoribosylanthranilate isomerase activities. In Penicillium chrysogenum (Penicillium notatum), this protein is Multifunctional tryptophan biosynthesis protein (trpC).